Consider the following 257-residue polypeptide: Imidazole glycerol phosphate synthase subunit HisF (257 aa).

Residues Asp12 and Asp131 contribute to the active site.

Belongs to the HisA/HisF family. As to quaternary structure, heterodimer of HisH and HisF.

It localises to the cytoplasm. The enzyme catalyses 5-[(5-phospho-1-deoxy-D-ribulos-1-ylimino)methylamino]-1-(5-phospho-beta-D-ribosyl)imidazole-4-carboxamide + L-glutamine = D-erythro-1-(imidazol-4-yl)glycerol 3-phosphate + 5-amino-1-(5-phospho-beta-D-ribosyl)imidazole-4-carboxamide + L-glutamate + H(+). Its pathway is amino-acid biosynthesis; L-histidine biosynthesis; L-histidine from 5-phospho-alpha-D-ribose 1-diphosphate: step 5/9. IGPS catalyzes the conversion of PRFAR and glutamine to IGP, AICAR and glutamate. The HisF subunit catalyzes the cyclization activity that produces IGP and AICAR from PRFAR using the ammonia provided by the HisH subunit. The sequence is that of Imidazole glycerol phosphate synthase subunit HisF from Cellvibrio japonicus (strain Ueda107) (Pseudomonas fluorescens subsp. cellulosa).